Here is a 498-residue protein sequence, read N- to C-terminus: Cytochrome P450 71D15 (498 aa).

Residues 3–23 traverse the membrane as a helical; Signal-anchor for type II membrane protein segment; the sequence is LLQLWSALIILVVTYTISLLI. Cys-437 contacts heme.

The protein belongs to the cytochrome P450 family. Heme serves as cofactor.

Its subcellular location is the endoplasmic reticulum membrane. It catalyses the reaction (4S)-limonene + reduced [NADPH--hemoprotein reductase] + O2 = (1S,6R)-isopiperitenol + oxidized [NADPH--hemoprotein reductase] + H2O + H(+). Hydroxylates (-)-(4S)-limonene to (-)-trans-isopiperitenol, a precursor of (-)-menthol, responsible for the cooling sensation of peppermint. Fluorinated substrate analogs are hydroxylated with the same regio- and stereochemistry. In Mentha piperita (Peppermint), this protein is Cytochrome P450 71D15 (CYP71D15).